Reading from the N-terminus, the 486-residue chain is Serine/threonine-protein phosphatase 2A 56 kDa regulatory subunit alpha isoform (486 aa).

Residues 1 to 18 (MSSSSPPAGAASAAISAS) are compositionally biased toward low complexity. A disordered region spans residues 1–52 (MSSSSPPAGAASAAISASEKVDGFTRKSVRKAQRQKRSQGSSQFRSQGSQAE). S2 carries the N-acetylserine modification. Positions 27-37 (KSVRKAQRQKR) are enriched in basic residues. The segment covering 38 to 51 (SQGSSQFRSQGSQA) has biased composition (low complexity). S41, S42, and S49 each carry phosphoserine.

The protein belongs to the phosphatase 2A regulatory subunit B56 family. In terms of assembly, PP2A consists of a common heterodimeric core enzyme, composed of a 36 kDa catalytic subunit (subunit C) and a 65 kDa constant regulatory subunit (PR65 or subunit A), that associates with a variety of regulatory subunits. Proteins that associate with the core dimer include three families of regulatory subunits B (the R2/B/PR55/B55, R3/B''/PR72/PR130/PR59 and R5/B'/B56 families), the 48 kDa variable regulatory subunit, viral proteins, and cell signaling molecules. Interacts with SGO1. Phosphorylated on serine residues. In terms of tissue distribution, widely expressed with the highest expression in heart and skeletal muscle.

It is found in the cytoplasm. Its subcellular location is the nucleus. It localises to the chromosome. The protein localises to the centromere. The B regulatory subunit might modulate substrate selectivity and catalytic activity, and might also direct the localization of the catalytic enzyme to a particular subcellular compartment. The sequence is that of Serine/threonine-protein phosphatase 2A 56 kDa regulatory subunit alpha isoform (PPP2R5A) from Homo sapiens (Human).